We begin with the raw amino-acid sequence, 330 residues long: MGTHRIILGLAALCCFCLPHLIEAKPFEVIVDQSGHGNFTTIQKAIDSVPINNTHWFFINVKAGLYREKITIPQKKPFIVIVGAGKRSTRVEWDDHASLAQSPTFATLADNTVVKKITFANSYNFPSNGKINKNPRVPAVAAFIGGDKSAFYSVGFAGIQDTLWDSDGRHYFHRCTIQGAVDFILGSGQSIYQSCVIQVLGGQLGPGVTGYITAQGRTNANDANGFVFINCLVHGFGKAYLGRAWRPYSRVIFYNSNLTDVVDPLGWWEWNYQGYEKQLTYAEHGCFGSGSNTSRRAKWVKKLSASAVQHLADLSFINRGGWVEDLPIRV.

Residues 1–24 (MGTHRIILGLAALCCFCLPHLIEA) form the signal peptide. N-linked (GlcNAc...) asparagine glycosylation is found at Asn38 and Asn52. The active-site Proton donor is the Asp161. Residue Asp182 is the Nucleophile of the active site. Arg243 and Trp245 together coordinate substrate. N-linked (GlcNAc...) asparagine glycosylation is found at Asn257 and Asn292.

The protein belongs to the pectinesterase family.

The protein localises to the secreted. It localises to the cell wall. It catalyses the reaction [(1-&gt;4)-alpha-D-galacturonosyl methyl ester](n) + n H2O = [(1-&gt;4)-alpha-D-galacturonosyl](n) + n methanol + n H(+). It functions in the pathway glycan metabolism; pectin degradation; 2-dehydro-3-deoxy-D-gluconate from pectin: step 1/5. Its function is as follows. Acts in the modification of cell walls via demethylesterification of cell wall pectin. The protein is Probable pectinesterase 55 (PME55) of Arabidopsis thaliana (Mouse-ear cress).